Consider the following 302-residue polypeptide: tRNA-cytidine(32) 2-sulfurtransferase (302 aa).

The short motif at 43-48 (SGGKDS) is the PP-loop motif element. Positions 118, 121, and 209 each coordinate [4Fe-4S] cluster.

The protein belongs to the TtcA family. In terms of assembly, homodimer. Requires Mg(2+) as cofactor. [4Fe-4S] cluster is required as a cofactor.

It localises to the cytoplasm. The enzyme catalyses cytidine(32) in tRNA + S-sulfanyl-L-cysteinyl-[cysteine desulfurase] + AH2 + ATP = 2-thiocytidine(32) in tRNA + L-cysteinyl-[cysteine desulfurase] + A + AMP + diphosphate + H(+). It functions in the pathway tRNA modification. Its function is as follows. Catalyzes the ATP-dependent 2-thiolation of cytidine in position 32 of tRNA, to form 2-thiocytidine (s(2)C32). The sulfur atoms are provided by the cysteine/cysteine desulfurase (IscS) system. The chain is tRNA-cytidine(32) 2-sulfurtransferase from Polynucleobacter necessarius subsp. necessarius (strain STIR1).